The primary structure comprises 486 residues: Vacuolar protein sorting-associated protein 73 (486 aa).

Residues 1–26 (MNRILSSASLLSNVSMPRQNKHKITK) lie on the Cytoplasmic side of the membrane. A helical membrane pass occupies residues 27–47 (ALCYAIIVASIGSIQFGYHLS). Residues 48 to 90 (ELNAPQQVLSCSEFDIPMEGYPYDRTWLGKRGYKQCIPLNDEQ) are Mitochondrial intermembrane-facing. The helical transmembrane segment at 91–111 (IGIVTSVFCIGGILGSYFATS) threads the bilayer. Over 112-119 (LANIYGRK) the chain is Cytoplasmic. The helical transmembrane segment at 120–140 (FSSLINCTLNIVGSLIIFNSN) threads the bilayer. The Mitochondrial intermembrane segment spans residues 141 to 146 (SYRGLI). A helical transmembrane segment spans residues 147 to 167 (IGRILVGISCGSLIVIIPLFI). Over 168–178 (KEVAPSGWEGL) the chain is Cytoplasmic. Residues 179 to 199 (LGSMTQICIRLGVLLTQGIAL) traverse the membrane as a helical segment. At 200-208 (PLTDSYRWR) the chain is on the mitochondrial intermembrane side. The chain crosses the membrane as a helical span at residues 209–229 (WILFGSFLIAVLNFFMWFIVD). Over 230 to 305 (ESPKWLLAHG…RDRTNVKSRH (76 aa)) the chain is Cytoplasmic. Residues 306–326 (VITVLLFGQQFCGINSIVLYG) traverse the membrane as a helical segment. Topologically, residues 327–342 (TKIISQLYPQHAIRIN) are mitochondrial intermembrane. A helical membrane pass occupies residues 343 to 363 (FFISMVNVLVTILVSLLIHSL). At 364–366 (PRK) the chain is on the cytoplasmic side. A helical membrane pass occupies residues 367 to 387 (PLLMTSTVLVSVTAFIMGIAM). Topologically, residues 388 to 396 (NHNKMNLLI) are mitochondrial intermembrane. A helical transmembrane segment spans residues 397–417 (VFSFIYMGVFTMGLNPLPFII). At 418 to 432 (MREVSKPQDMVLAQR) the chain is on the cytoplasmic side. The chain crosses the membrane as a helical span at residues 433–453 (YGTICNWVGTFIIAYTFPIIH). Position 454 (aspartate 454) is a topological domain, mitochondrial intermembrane. A helical membrane pass occupies residues 455 to 475 (VLSGYVFIIFAIIACSISAFI). Topologically, residues 476–486 (WKKVPETKRSG) are cytoplasmic.

It belongs to the major facilitator superfamily. Sugar transporter (TC 2.A.1.1) family.

It is found in the mitochondrion membrane. May be involved in vacuolar protein sorting. The polypeptide is Vacuolar protein sorting-associated protein 73 (VPS73) (Saccharomyces cerevisiae (strain ATCC 204508 / S288c) (Baker's yeast)).